The chain runs to 344 residues: Phenylalanine--tRNA ligase alpha subunit (344 aa).

Glu256 lines the Mg(2+) pocket.

This sequence belongs to the class-II aminoacyl-tRNA synthetase family. Phe-tRNA synthetase alpha subunit type 1 subfamily. As to quaternary structure, tetramer of two alpha and two beta subunits. Mg(2+) serves as cofactor.

It is found in the cytoplasm. It catalyses the reaction tRNA(Phe) + L-phenylalanine + ATP = L-phenylalanyl-tRNA(Phe) + AMP + diphosphate + H(+). The chain is Phenylalanine--tRNA ligase alpha subunit from Anoxybacillus flavithermus (strain DSM 21510 / WK1).